The primary structure comprises 101 residues: MMLEHIPVLSAYLFSIDIYGLITSRNMVRALMCLELILNAVNINFVTFSDFFDSRQLKGNIFSIFVIAIAAAEAAIGSAIVSSIYRNRKSTRINQSTLLNK.

Transmembrane regions (helical) follow at residues Met-2–Ile-22, Met-32–Phe-52, and Ile-61–Val-81.

Belongs to the complex I subunit 4L family. NDH is composed of at least 16 different subunits, 5 of which are encoded in the nucleus.

The protein resides in the plastid. Its subcellular location is the chloroplast thylakoid membrane. The catalysed reaction is a plastoquinone + NADH + (n+1) H(+)(in) = a plastoquinol + NAD(+) + n H(+)(out). The enzyme catalyses a plastoquinone + NADPH + (n+1) H(+)(in) = a plastoquinol + NADP(+) + n H(+)(out). Its function is as follows. NDH shuttles electrons from NAD(P)H:plastoquinone, via FMN and iron-sulfur (Fe-S) centers, to quinones in the photosynthetic chain and possibly in a chloroplast respiratory chain. The immediate electron acceptor for the enzyme in this species is believed to be plastoquinone. Couples the redox reaction to proton translocation, and thus conserves the redox energy in a proton gradient. The polypeptide is NAD(P)H-quinone oxidoreductase subunit 4L, chloroplastic (Gossypium barbadense (Sea Island cotton)).